The following is a 269-amino-acid chain: GTP cyclohydrolase FolE2 (269 aa).

It belongs to the GTP cyclohydrolase IV family.

It catalyses the reaction GTP + H2O = 7,8-dihydroneopterin 3'-triphosphate + formate + H(+). It functions in the pathway cofactor biosynthesis; 7,8-dihydroneopterin triphosphate biosynthesis; 7,8-dihydroneopterin triphosphate from GTP: step 1/1. In terms of biological role, converts GTP to 7,8-dihydroneopterin triphosphate. The sequence is that of GTP cyclohydrolase FolE2 from Azoarcus sp. (strain BH72).